Consider the following 71-residue polypeptide: Sec-independent protein translocase protein TatA (71 aa).

Residues 1 to 21 form a helical membrane-spanning segment; that stretch reads MGSFSLLHWLVVLVIVLLVFG. The segment at 43-71 is disordered; it reads LREDDKPTDQLGSTSQSTASGPQQDHGKH. The span at 52-65 shows a compositional bias: polar residues; it reads QLGSTSQSTASGPQ.

It belongs to the TatA/E family. In terms of assembly, the Tat system comprises two distinct complexes: a TatABC complex, containing multiple copies of TatA, TatB and TatC subunits, and a separate TatA complex, containing only TatA subunits. Substrates initially bind to the TatABC complex, which probably triggers association of the separate TatA complex to form the active translocon.

It is found in the cell inner membrane. Part of the twin-arginine translocation (Tat) system that transports large folded proteins containing a characteristic twin-arginine motif in their signal peptide across membranes. TatA could form the protein-conducting channel of the Tat system. This is Sec-independent protein translocase protein TatA from Xylella fastidiosa (strain 9a5c).